A 154-amino-acid chain; its full sequence is tRNA (cytidine(34)-2'-O)-methyltransferase (154 aa).

S-adenosyl-L-methionine is bound by residues Leu-78, Gly-100, Leu-122, and Ser-130.

The protein belongs to the class IV-like SAM-binding methyltransferase superfamily. RNA methyltransferase TrmH family. TrmL subfamily. As to quaternary structure, homodimer.

The protein localises to the cytoplasm. It carries out the reaction cytidine(34) in tRNA + S-adenosyl-L-methionine = 2'-O-methylcytidine(34) in tRNA + S-adenosyl-L-homocysteine + H(+). The catalysed reaction is 5-carboxymethylaminomethyluridine(34) in tRNA(Leu) + S-adenosyl-L-methionine = 5-carboxymethylaminomethyl-2'-O-methyluridine(34) in tRNA(Leu) + S-adenosyl-L-homocysteine + H(+). Its function is as follows. Methylates the ribose at the nucleotide 34 wobble position in the two leucyl isoacceptors tRNA(Leu)(CmAA) and tRNA(Leu)(cmnm5UmAA). Catalyzes the methyl transfer from S-adenosyl-L-methionine to the 2'-OH of the wobble nucleotide. This chain is tRNA (cytidine(34)-2'-O)-methyltransferase, found in Methylovorus glucosotrophus (strain SIP3-4).